The following is a 981-amino-acid chain: MLAVCARHGPAKLPPPPPPLAGERAAAWVVGRWWWRPAAAGRRGVVAARASFFSSRIGLDSQNYHTRDLSQLLWVGPVPGDIAEIEAYCRIFRAAEQLHTAVMSALCDPETGECPVRYDVQTEDLPVLEDKVAAVLGCMLALLNRGRKEVLSGRSGVASAFQGSEDSTMDKIPPLALFRGDLKRCCESMQVALASYLVPSEARGLDIWRKLQRLKNACYDAGFPRADGHPCPTLFANWFPVYFSTVPDDSLSDELEVAFWRGGQVSEEGLEWLLLKGFKTIVDLREEDVKDDLYLSAIHEAVSLGKIEVVNLPVEIGTAPSAEQVQRFAEIVSDSAKKPIYLHSQEGISRTSAMVSRWKQYVTRAERLATQNRSLNGNGKHVRNDQTEQLTNSPGFSSEGSENGTPLESDRTMEGETCDIDIETARHNLEITNSLPSEQSTEQGELHGTRTELQSNFRLESNPLKAQFPSCDVFSKKGMTDFFRSKKVYPKSVLNPRRRSNSLLVSRRKQSLSAEQNGAIDYEAAEFKVLKSSNGASFDNDYILSVASGITNGKPSNNGASTSVEDREMETSVVTVDPRTSDTSNSNGNAPLGSQKSAERNGSLYVEREKSDHVDGNMCASATGVVRLQSRRKAEMFLVRTDGFSCTREKVTESSLAFTHPSTQQQMLMWKSPPKTVLLLKKLGDELMEEAKEVASFLHHQEKMNVLVEPDVHDIFARIPGYGFVQTFYTQDTSDLHERVDFVACLGGDGVILHASNLFRTSVPPVVSFNLGSLGFLTSHNFEGFRQDLRAVIHGNNTLGVYITLRMRLRCEIFRNGKAMPGKVFDVLNEVVVDRGSNPYLSKIECYEHNHLITKVQGDGVIVATPTGSTAYSTAAGGSMVHPNVPCMLFTPICPHSLSFRPVILPDSARLELKIPDDARSNAWVSFDGKRRQQLSRGDSVQISMSQHPLPTVNKSDQTGDWFRSLIRCLNWNERLDQKAL.

A calmodulin-binding region spans residues 319 to 364 (APSAEQVQRFAEIVSDSAKKPIYLHSQEGISRTSAMVSRWKQYVTR). Disordered regions lie at residues 369–413 (ATQN…DRTM) and 551–601 (TNGK…AERN). Composition is skewed to polar residues over residues 387 to 406 (TEQL…NGTP), 551 to 563 (TNGK…ASTS), and 581 to 596 (SDTS…GSQK).

It belongs to the NAD kinase family.

It localises to the plastid. It is found in the chloroplast. The enzyme catalyses NAD(+) + ATP = ADP + NADP(+) + H(+). Involved in chlorophyll synthesis and chloroplast protection against oxidative damage. The polypeptide is Probable NAD kinase 2, chloroplastic (Oryza sativa subsp. japonica (Rice)).